The chain runs to 605 residues: F-box/WD repeat-containing protein 1A (605 aa).

Residues 128–177 (ASYEKEKELCVKYFEQWSESDQVEFVEHLISQMCHYQHGHINSYLKPMLQ) form a homodimerization domain D region. The F-box domain occupies 190 to 228 (DHIAENILSYLDAKSLCAAELVCKEWYRVTSDGMLWKKL). The required for down-regulation of SNAI1 stretch occupies residues 190–228 (DHIAENILSYLDAKSLCAAELVCKEWYRVTSDGMLWKKL). WD repeat units follow at residues 301–338 (ETSK…CKRI), 341–378 (GHTG…MLNT), 381–418 (HHCE…DITL), 424–461 (GHRA…FVRT), 464–503 (GHKR…RVLE), 505–541 (HEEL…DPRA), and 553–590 (EHSG…AAQA).

Homodimer. Self-associates. Component of the SCF(BTRC) complex formed of CUL1, SKP1, RBX1 and a BTRC dimer. Direct interaction with SKP1 occurs via the F-box domain. Interacts with phosphorylated ubiquitination substrates SMAD3 and SMAD4. Interacts with phosphorylated ubiquitination substrates CTNNB1, NFKBIA, NFKBIB, NFKBIE, NFKB1/nuclear factor NF-kappa-B p105 subunit, ATF4, CDC25A, DLG1, FBXO5 and SNAI1; the interaction requires the phosphorylation of the 2 serine residues in the substrate destruction motif D-S-G-X(2,3,4)-S. Binds UBQLN1. Interacts with CDC34 and UBE2R2. Interacts with FBXW11. Interacts with CUL4A and DDB1. Part of a SCF(BTRC)-like complex lacking CUL1, which is associated with phosphorylated NKBIA and RELA; RELA interacts directly with NFKBIA. Interacts with the phosphorylated form of GLI3. Interacts with CLU. Interacts with PER1 (phosphorylated), PER2 (phosphorylated) and PER3. Interacts with phosphorylated ubiquitination substrate CEP68. Interacts with ZC3H12A; this interaction occurs when ZC3H12A is phosphorylated in a IKBKB/IKKB-dependent manner. Interacts with HSF1; this interaction occurs during mitosis and induces HSF1 ubiquitin-dependent degradation, a process inhibited by CDC20. Interacts with NFE2L1. Interacts with INAVA. Interacts with IL10RA; this interaction leads to IL10RA ubiquitination and subsequent degradation. Interacts with REST. Interacts with KLF4; this interaction leads to KLF4 ubiquitination and subsequent degradation. Interacts with UBR2, as part of a SCF(BTRC) complex; the interaction mediates 'Lys-48'-linked ubiquitination of UBR2 and is regulated by DUSP22 in the T-cell receptor signaling pathway. As to quaternary structure, (Microbial infection) Interacts with vaccinia virus A49; this interaction inhibits NF-kappa-B activation. In terms of assembly, (Microbial infection) Interacts with HIV-1 Vpu. Ubiquitinated. Deubiquitinated by OTUD5, promoting its stability. Expressed in epididymis (at protein level).

It localises to the cytoplasm. Its subcellular location is the nucleus. It functions in the pathway protein modification; protein ubiquitination. Substrate recognition component of a SCF (SKP1-CUL1-F-box protein) E3 ubiquitin-protein ligase complex which mediates the ubiquitination and subsequent proteasomal degradation of target proteins. Recognizes and binds to phosphorylated target proteins. SCF(BTRC) mediates the ubiquitination of CTNNB1 and participates in Wnt signaling. SCF(BTRC) mediates the ubiquitination of phosphorylated NFKB1, ATF4, CDC25A, DLG1, FBXO5, PER1, SMAD3, SMAD4, SNAI1 and probably NFKB2. SCF(BTRC) mediates the ubiquitination of NFKBIA, NFKBIB and NFKBIE; the degradation frees the associated NFKB1 to translocate into the nucleus and to activate transcription. Ubiquitination of NFKBIA occurs at 'Lys-21' and 'Lys-22'. The SCF(FBXW11) complex also regulates NF-kappa-B by mediating ubiquitination of phosphorylated NFKB1: specifically ubiquitinates the p105 form of NFKB1, leading to its degradation. SCF(BTRC) mediates the ubiquitination of CEP68; this is required for centriole separation during mitosis. SCF(BTRC) mediates the ubiquitination and subsequent degradation of nuclear NFE2L1. Has an essential role in the control of the clock-dependent transcription via degradation of phosphorylated PER1 and PER2. May be involved in ubiquitination and subsequent proteasomal degradation through a DBB1-CUL4 E3 ubiquitin-protein ligase. Required for activation of NFKB-mediated transcription by IL1B, MAP3K14, MAP3K1, IKBKB and TNF. Required for proteolytic processing of GLI3. Mediates ubiquitination of REST, thereby leading to its proteasomal degradation. SCF(BTRC) mediates the ubiquitination and subsequent proteasomal degradation of KLF4; thereby negatively regulating cell pluripotency maintenance and embryogenesis. SCF(BTRC) acts as a regulator of mTORC1 signaling pathway by catalyzing ubiquitination and subsequent proteasomal degradation of phosphorylated DEPTOR, TFE3 and MITF. SCF(BTRC) directs 'Lys-48'-linked ubiquitination of UBR2 in the T-cell receptor signaling pathway. This Homo sapiens (Human) protein is F-box/WD repeat-containing protein 1A (BTRC).